The chain runs to 212 residues: uncharacterized protein (212 aa).

The N-terminal stretch at 1-21 (MRRLTAFGLALLLLASGVARG) is a signal peptide.

It to E.coli YfaT and T.maritima TM0986.

This is an uncharacterized protein from Pseudomonas aeruginosa (strain ATCC 15692 / DSM 22644 / CIP 104116 / JCM 14847 / LMG 12228 / 1C / PRS 101 / PAO1).